A 353-amino-acid chain; its full sequence is Forkhead box protein I3-A (353 aa).

Residues 116-210 constitute a DNA-binding region (fork-head); it reads RPPYSYSALI…DNGNFRRKRK (95 aa). The interval 201 to 255 is disordered; sequence DNGNFRRKRKRKSDSLAEEEGKGYSGSDSALSSPKNPSDSSERGNSPISTDQAPC. Positions 206–212 match the Nuclear localization signal motif; the sequence is RRKRKRK. Positions 213–222 are enriched in basic and acidic residues; the sequence is SDSLAEEEGK. Residues 226 to 252 show a composition bias toward polar residues; sequence GSDSALSSPKNPSDSSERGNSPISTDQ.

In terms of tissue distribution, expressed in ionocyte precursors.

The protein resides in the nucleus. In terms of biological role, transcription factor required for epithelial cell differentiation. Involved in specification of skin ionocytes from epidermal precursors. This is Forkhead box protein I3-A from Danio rerio (Zebrafish).